A 1269-amino-acid chain; its full sequence is Furin-like protease 1, isoforms 1/1-X/2 (1269 aa).

The tract at residues 1–57 (MKNDVVRWSRQPTSNTTNSSSSSRSDSNSTHKHRSKSNKLNARQLGSNAARSCQQRS) is disordered. The segment covering 13–28 (TSNTTNSSSSSRSDSN) has biased composition (low complexity). 3 N-linked (GlcNAc...) asparagine glycosylation sites follow: N15, N18, and N28. A compositionally biased stretch (polar residues) spans 38 to 57 (NKLNARQLGSNAARSCQQRS). N108 is a glycosylation site (N-linked (GlcNAc...) asparagine). A helical transmembrane segment spans residues 119–139 (VFLLALQFSAVVFLCNINVGF). Over residues 150-163 (SAGGSSPAAPSSAP) the composition is skewed to low complexity. Residues 150–187 (SAGGSSPAAPSSAPSSPPTVAVPPPPPPSSALKVDPNG) form a disordered region. Residues 164–178 (SSPPTVAVPPPPPPS) show a composition bias toward pro residues. N333 carries N-linked (GlcNAc...) asparagine glycosylation. Positions 340–654 (MWYLNRGGGL…YGLMDAAEMV (315 aa)) constitute a Peptidase S8 domain. Residues D372 and H413 each act as charge relay system in the active site. N-linked (GlcNAc...) asparagine glycosylation is present at N426. 2 disulfide bridges follow: C430-C579 and C522-C552. S587 serves as the catalytic Charge relay system. The N-linked (GlcNAc...) asparagine glycan is linked to N606. The P/Homo B domain occupies 662 to 793 (AVPEQQRCEI…SLIFYGTTQS (132 aa)). A disulfide bridge links C669 with C695. Residues N727 and N814 are each glycosylated (N-linked (GlcNAc...) asparagine). Disordered regions lie at residues 796-875 (PNDP…PPKQ), 891-1015 (ANGK…NSRI), 1031-1050 (ELEPYENSSPKGKPKQAKQG), and 1057-1083 (LFKPTNGGNSRQGNTKKSPSVPPPSQT). Low complexity-rich tracts occupy residues 811 to 821 (TTPNSSSTTSN) and 835 to 851 (PNNFGSSPSGGSKLPLG). Residue N857 is glycosylated (N-linked (GlcNAc...) asparagine). Polar residues predominate over residues 858–868 (KSSYVTNNPLL). 2 N-linked (GlcNAc...) asparagine glycosylation sites follow: N897 and N908. 2 stretches are compositionally biased toward low complexity: residues 905–915 (NKGNKSNNGNK) and 929–940 (TTQSTIIQTSTS). A compositionally biased stretch (basic and acidic residues) spans 975–985 (KSYDEKSRKVV). The N-linked (GlcNAc...) asparagine glycan is linked to N994. The span at 1005–1014 (ESTTTSSNSR) shows a compositional bias: polar residues. The segment covering 1062-1074 (NGGNSRQGNTKKS) has biased composition (polar residues). Residues 1233–1253 (LGLSLLFFMIMQVFFLNFKHA) form a helical membrane-spanning segment.

It belongs to the peptidase S8 family. Furin subfamily. The cofactor is Ca(2+). In terms of tissue distribution, in adults, isoform 1-X is expressed in CNS, fat body and female reproductive tissues, and in embryos, in CNS, tracheal pits, hindgut, posterior spiracles and anal pads.

It localises to the golgi apparatus membrane. The enzyme catalyses Release of mature proteins from their proproteins by cleavage of -Arg-Xaa-Yaa-Arg-|-Zaa- bonds, where Xaa can be any amino acid and Yaa is Arg or Lys. Releases albumin, complement component C3 and von Willebrand factor from their respective precursors.. In terms of biological role, furin is likely to represent the ubiquitous endoprotease activity within constitutive secretory pathways and capable of cleavage at the RX(K/R)R consensus motif. The protein is Furin-like protease 1, isoforms 1/1-X/2 (Fur1) of Drosophila melanogaster (Fruit fly).